A 243-amino-acid chain; its full sequence is Adenosylcobinamide-GDP ribazoletransferase (243 aa).

The next 6 helical transmembrane spans lie at 33–53 (FLPVIGLLIGILMYLPTLLAP), 59–79 (IIIVSIWALYFLITGGLHIDG), 105–125 (IGAFGVLGILWLLILNLTLAY), 127–147 (TENMLLLLVPVVGRASAVFAA), 172–192 (VISIAFSLLLGSMVSIKGAII), and 223–243 (TIEISQTLFMLSAYLLKSIII).

This sequence belongs to the CobS family. The cofactor is Mg(2+).

The protein localises to the cell membrane. It catalyses the reaction alpha-ribazole + adenosylcob(III)inamide-GDP = adenosylcob(III)alamin + GMP + H(+). The catalysed reaction is alpha-ribazole 5'-phosphate + adenosylcob(III)inamide-GDP = adenosylcob(III)alamin 5'-phosphate + GMP + H(+). It participates in cofactor biosynthesis; adenosylcobalamin biosynthesis; adenosylcobalamin from cob(II)yrinate a,c-diamide: step 7/7. Functionally, joins adenosylcobinamide-GDP and alpha-ribazole to generate adenosylcobalamin (Ado-cobalamin). Also synthesizes adenosylcobalamin 5'-phosphate from adenosylcobinamide-GDP and alpha-ribazole 5'-phosphate. The chain is Adenosylcobinamide-GDP ribazoletransferase from Alkaliphilus oremlandii (strain OhILAs) (Clostridium oremlandii (strain OhILAs)).